The primary structure comprises 937 residues: MORC family CW-type zinc finger protein 4 (937 aa).

A CW-type zinc finger spans residues 420-472; that stretch reads KVPDQTWVQCDECLKWRKLPGKIDPSMLPARWFCYYNSHPKYRRCSVPEEQEL. Residues cysteine 429, cysteine 432, cysteine 453, and cysteine 464 each coordinate Zn(2+). Residues 606-637 form a disordered region; that stretch reads PEGENSHDKSSSERSTPPYLFPEYPEASKNTG. Residues 762-876 adopt a coiled-coil conformation; that stretch reads KLKNQRELEE…LEMLQKAQVS (115 aa).

Expressed at low levels in normal tissues, with highest expression levels in placenta and testis. Expression is significantly increased in subset of diffuse large B-cell lymphomas.

It is found in the nucleus. Histone methylation reader which binds to non-methylated (H3K4me0), monomethylated (H3K4me1), dimethylated (H3K4me2) and trimethylated (H3K4me3) 'Lys-4' on histone H3. The order of binding preference is H3K4me3 &gt; H3K4me2 &gt; H3K4me1 &gt; H3K4me0. The protein is MORC family CW-type zinc finger protein 4 (MORC4) of Homo sapiens (Human).